The primary structure comprises 317 residues: GTPase Era (317 aa).

The region spanning 23 to 190 (RSGFVALIGP…MDYLVETLPE (168 aa)) is the Era-type G domain. The tract at residues 31-38 (GPTNAGKS) is G1. 31–38 (GPTNAGKS) contacts GTP. A G2 region spans residues 57-61 (QTTRA). A G3 region spans residues 78 to 81 (DTPG). Residues 78-82 (DTPGI) and 140-143 (NKID) each bind GTP. The G4 stretch occupies residues 140–143 (NKID). Residues 169–171 (ISA) are G5. The region spanning 221–298 (LHQELPYASH…HLFLFVKVRE (78 aa)) is the KH type-2 domain.

Belongs to the TRAFAC class TrmE-Era-EngA-EngB-Septin-like GTPase superfamily. Era GTPase family. Monomer.

The protein resides in the cytoplasm. The protein localises to the cell inner membrane. Functionally, an essential GTPase that binds both GDP and GTP, with rapid nucleotide exchange. Plays a role in 16S rRNA processing and 30S ribosomal subunit biogenesis and possibly also in cell cycle regulation and energy metabolism. In Agrobacterium fabrum (strain C58 / ATCC 33970) (Agrobacterium tumefaciens (strain C58)), this protein is GTPase Era.